Consider the following 307-residue polypeptide: 4-diphosphocytidyl-2-C-methyl-D-erythritol kinase (307 aa).

Lys-16 is a catalytic residue. Position 101 to 111 (101 to 111 (PVAGGMAGGSA)) interacts with ATP. The active site involves Asp-143.

This sequence belongs to the GHMP kinase family. IspE subfamily.

It carries out the reaction 4-CDP-2-C-methyl-D-erythritol + ATP = 4-CDP-2-C-methyl-D-erythritol 2-phosphate + ADP + H(+). Its pathway is isoprenoid biosynthesis; isopentenyl diphosphate biosynthesis via DXP pathway; isopentenyl diphosphate from 1-deoxy-D-xylulose 5-phosphate: step 3/6. Its function is as follows. Catalyzes the phosphorylation of the position 2 hydroxy group of 4-diphosphocytidyl-2C-methyl-D-erythritol. The chain is 4-diphosphocytidyl-2-C-methyl-D-erythritol kinase from Nocardia farcinica (strain IFM 10152).